A 66-amino-acid chain; its full sequence is Large ribosomal subunit protein uL29 (66 aa).

Belongs to the universal ribosomal protein uL29 family.

The chain is Large ribosomal subunit protein uL29 from Borrelia garinii subsp. bavariensis (strain ATCC BAA-2496 / DSM 23469 / PBi) (Borreliella bavariensis).